Consider the following 79-residue polypeptide: Exodeoxyribonuclease 7 small subunit (79 aa).

Belongs to the XseB family. As to quaternary structure, heterooligomer composed of large and small subunits.

The protein localises to the cytoplasm. It catalyses the reaction Exonucleolytic cleavage in either 5'- to 3'- or 3'- to 5'-direction to yield nucleoside 5'-phosphates.. Its function is as follows. Bidirectionally degrades single-stranded DNA into large acid-insoluble oligonucleotides, which are then degraded further into small acid-soluble oligonucleotides. This chain is Exodeoxyribonuclease 7 small subunit, found in Lactococcus lactis subsp. lactis (strain IL1403) (Streptococcus lactis).